A 424-amino-acid polypeptide reads, in one-letter code: Serine--tRNA ligase (424 aa).

230–232 (TAE) provides a ligand contact to L-serine. 261 to 263 (RAE) serves as a coordination point for ATP. Position 284 (Glu-284) interacts with L-serine. An ATP-binding site is contributed by 348–351 (EISS). Ser-384 provides a ligand contact to L-serine.

This sequence belongs to the class-II aminoacyl-tRNA synthetase family. Type-1 seryl-tRNA synthetase subfamily. As to quaternary structure, homodimer. The tRNA molecule binds across the dimer.

It is found in the cytoplasm. The catalysed reaction is tRNA(Ser) + L-serine + ATP = L-seryl-tRNA(Ser) + AMP + diphosphate + H(+). It catalyses the reaction tRNA(Sec) + L-serine + ATP = L-seryl-tRNA(Sec) + AMP + diphosphate + H(+). It participates in aminoacyl-tRNA biosynthesis; selenocysteinyl-tRNA(Sec) biosynthesis; L-seryl-tRNA(Sec) from L-serine and tRNA(Sec): step 1/1. Functionally, catalyzes the attachment of serine to tRNA(Ser). Is also able to aminoacylate tRNA(Sec) with serine, to form the misacylated tRNA L-seryl-tRNA(Sec), which will be further converted into selenocysteinyl-tRNA(Sec). The sequence is that of Serine--tRNA ligase from Carboxydothermus hydrogenoformans (strain ATCC BAA-161 / DSM 6008 / Z-2901).